The primary structure comprises 81 residues: Acyl carrier protein (81 aa).

Residues 4-79 (SEIFGKVKDI…AAVDFIAGKV (76 aa)) form the Carrier domain. O-(pantetheine 4'-phosphoryl)serine is present on serine 39.

Belongs to the acyl carrier protein (ACP) family. Post-translationally, 4'-phosphopantetheine is transferred from CoA to a specific serine of apo-ACP by AcpS. This modification is essential for activity because fatty acids are bound in thioester linkage to the sulfhydryl of the prosthetic group.

It localises to the cytoplasm. It participates in lipid metabolism; fatty acid biosynthesis. In terms of biological role, carrier of the growing fatty acid chain in fatty acid biosynthesis. This Acaryochloris marina (strain MBIC 11017) protein is Acyl carrier protein.